Reading from the N-terminus, the 142-residue chain is Hemoglobin subunit alpha (142 aa).

The Globin domain occupies Val-2–Arg-142. Ser-4 is subject to Phosphoserine. Lys-8 and Lys-12 each carry N6-succinyllysine. N6-acetyllysine; alternate is present on Lys-17. The residue at position 17 (Lys-17) is an N6-succinyllysine; alternate. Tyr-25 is modified (phosphotyrosine). Ser-36 carries the phosphoserine modification. Lys-41 is subject to N6-succinyllysine. Ser-50 bears the Phosphoserine mark. His-59 contributes to the O2 binding site. Residue His-88 participates in heme b binding. Phosphothreonine is present on Thr-109. Phosphoserine is present on residues Ser-125 and Ser-132. 2 positions are modified to phosphothreonine: Thr-135 and Thr-138. Ser-139 carries the post-translational modification Phosphoserine.

The protein belongs to the globin family. Heterotetramer of two alpha chains and two beta chains. Red blood cells.

Functionally, involved in oxygen transport from the lung to the various peripheral tissues. Hemopressin acts as an antagonist peptide of the cannabinoid receptor CNR1. Hemopressin-binding efficiently blocks cannabinoid receptor CNR1 and subsequent signaling. The sequence is that of Hemoglobin subunit alpha (HBA) from Cricetomys gambianus (Northern giant pouched rat).